The following is an 811-amino-acid chain: G-type lectin S-receptor-like serine/threonine-protein kinase LECRK3 (811 aa).

A signal peptide spans 1 to 23 (MAHLLFLPILQLLLLYCTKSAQA). In terms of domain architecture, Bulb-type lectin spans 24-153 (QLNISIGSSL…DGATKWESFG (130 aa)). At 24–464 (QLNISIGSSL…DKKYWILGSS (441 aa)) the chain is on the extracellular side. N-linked (GlcNAc...) asparagine glycans are attached at residues asparagine 26, asparagine 39, asparagine 59, asparagine 219, asparagine 226, asparagine 237, and asparagine 242. Residues 292 to 344 (PENICQSIQTMVGSGACGFNSYCTIDGTKNTTSCLCPQNYKFIDDKRKYKGCR) form the EGF-like; atypical domain. 5 disulfide bridges follow: cysteine 296–cysteine 314, cysteine 308–cysteine 325, cysteine 327–cysteine 343, cysteine 389–cysteine 411, and cysteine 393–cysteine 399. An N-linked (GlcNAc...) asparagine glycan is attached at asparagine 321. In terms of domain architecture, PAN spans 352–430 (CDLDETTAML…GKMDVNVPRT (79 aa)). The chain crosses the membrane as a helical span at residues 465 to 485 (LLFGSSVLVNFLLISVMLFGT). Residues 486-811 (YCSITSRKKI…DPSSYISSLA (326 aa)) lie on the Cytoplasmic side of the membrane. The Protein kinase domain maps to 521–795 (GGFQEVLGTG…KVTQMLDGAV (275 aa)). ATP contacts are provided by residues 527–535 (LGTGASGVV) and lysine 551. Residue aspartate 645 is the Proton acceptor of the active site.

The protein belongs to the protein kinase superfamily. Ser/Thr protein kinase family.

The protein resides in the membrane. The catalysed reaction is L-seryl-[protein] + ATP = O-phospho-L-seryl-[protein] + ADP + H(+). It catalyses the reaction L-threonyl-[protein] + ATP = O-phospho-L-threonyl-[protein] + ADP + H(+). Its function is as follows. Involved in resistance against the herbivorous insect brown planthopper (N.lugens, BPH). Member of the BPH3 (BPH resistance locus 3) cluster which contains LECRK1, LECRK2 and LECRK3. The chain is G-type lectin S-receptor-like serine/threonine-protein kinase LECRK3 from Oryza sativa subsp. indica (Rice).